The primary structure comprises 305 residues: Ribonuclease Z (305 aa).

7 residues coordinate Zn(2+): H61, H63, D65, H66, H141, D209, and H268. Residue D65 is the Proton acceptor of the active site.

This sequence belongs to the RNase Z family. Homodimer. Zn(2+) serves as cofactor.

It carries out the reaction Endonucleolytic cleavage of RNA, removing extra 3' nucleotides from tRNA precursor, generating 3' termini of tRNAs. A 3'-hydroxy group is left at the tRNA terminus and a 5'-phosphoryl group is left at the trailer molecule.. In terms of biological role, zinc phosphodiesterase, which displays some tRNA 3'-processing endonuclease activity. Probably involved in tRNA maturation, by removing a 3'-trailer from precursor tRNA. This is Ribonuclease Z from Clostridioides difficile (strain 630) (Peptoclostridium difficile).